The sequence spans 634 residues: Chaperone protein HtpG (634 aa).

Residues Met-1–Arg-343 are a; substrate-binding. Residues Glu-344 to Arg-560 form a b region. The interval Ile-561 to Leu-634 is c.

This sequence belongs to the heat shock protein 90 family. In terms of assembly, homodimer.

It is found in the cytoplasm. Functionally, molecular chaperone. Has ATPase activity. The chain is Chaperone protein HtpG from Methylococcus capsulatus (strain ATCC 33009 / NCIMB 11132 / Bath).